A 622-amino-acid chain; its full sequence is Low affinity potassium transport system protein Kup (622 aa).

A run of 12 helical transmembrane segments spans residues 9-29 (LPAI…TSPL), 49-69 (VFGF…IKYL), 103-123 (VIMG…TPAI), 137-157 (PQLD…LFMI), 165-185 (VGKL…GLGL), 213-233 (VSFI…ALYA), 247-267 (WFTV…ALLL), 276-296 (PFFL…AALA), 337-357 (IYIP…IVSF), 363-383 (LAAA…ILST), 396-416 (FVAL…TANL), and 419-439 (LLSG…VMTT).

It belongs to the HAK/KUP transporter (TC 2.A.72) family.

The protein resides in the cell inner membrane. It catalyses the reaction K(+)(in) + H(+)(in) = K(+)(out) + H(+)(out). Responsible for the low-affinity transport of potassium into the cell. Likely operates as a K(+):H(+) symporter. This is Low affinity potassium transport system protein Kup from Escherichia fergusonii (strain ATCC 35469 / DSM 13698 / CCUG 18766 / IAM 14443 / JCM 21226 / LMG 7866 / NBRC 102419 / NCTC 12128 / CDC 0568-73).